The following is a 350-amino-acid chain: Heme A synthase (350 aa).

A run of 8 helical transmembrane segments spans residues 16-36 (LARW…VGGI), 77-97 (FQLV…IFFW), 101-121 (HRLL…WFWI), 136-156 (LLAL…SGIV), 170-190 (LLVA…LVAL), 201-221 (GIGL…ALVA), 265-285 (VFLV…VLVV), and 299-321 (IVLH…SGVA). Histidine 272 provides a ligand contact to heme. Histidine 328 lines the heme pocket.

The protein belongs to the COX15/CtaA family. Type 2 subfamily. Interacts with CtaB. The cofactor is heme b.

Its subcellular location is the cell membrane. The enzyme catalyses Fe(II)-heme o + 2 A + H2O = Fe(II)-heme a + 2 AH2. It participates in porphyrin-containing compound metabolism; heme A biosynthesis; heme A from heme O: step 1/1. Catalyzes the conversion of heme O to heme A by two successive hydroxylations of the methyl group at C8. The first hydroxylation forms heme I, the second hydroxylation results in an unstable dihydroxymethyl group, which spontaneously dehydrates, resulting in the formyl group of heme A. In Novosphingobium aromaticivorans (strain ATCC 700278 / DSM 12444 / CCUG 56034 / CIP 105152 / NBRC 16084 / F199), this protein is Heme A synthase.